The chain runs to 98 residues: NADH-ubiquinone oxidoreductase chain 4L (98 aa).

3 helical membrane passes run 1-21 (MTLT…GMLT), 27-47 (VASL…ATLI), and 61-81 (IILL…LISI).

The protein belongs to the complex I subunit 4L family. Core subunit of respiratory chain NADH dehydrogenase (Complex I) which is composed of 45 different subunits.

It is found in the mitochondrion inner membrane. The enzyme catalyses a ubiquinone + NADH + 5 H(+)(in) = a ubiquinol + NAD(+) + 4 H(+)(out). Its function is as follows. Core subunit of the mitochondrial membrane respiratory chain NADH dehydrogenase (Complex I) which catalyzes electron transfer from NADH through the respiratory chain, using ubiquinone as an electron acceptor. Part of the enzyme membrane arm which is embedded in the lipid bilayer and involved in proton translocation. The protein is NADH-ubiquinone oxidoreductase chain 4L (MT-ND4L) of Macaca mulatta (Rhesus macaque).